The sequence spans 341 residues: Retinol dehydrogenase 10-A (341 aa).

Residues I3–G23 form a helical; Signal-anchor membrane-spanning segment. NADP(+) is bound at residue L40–V64. Residue S197 coordinates substrate. Catalysis depends on Y210, which acts as the Proton acceptor.

The protein belongs to the short-chain dehydrogenases/reductases (SDR) family.

The protein localises to the microsome membrane. The protein resides in the endoplasmic reticulum membrane. It carries out the reaction all-trans-retinol + NADP(+) = all-trans-retinal + NADPH + H(+). It participates in cofactor metabolism; retinol metabolism. In terms of biological role, retinol dehydrogenase with a clear preference for NADP. Converts all-trans-retinol to all-trans-retinal. Has no detectable activity towards 11-cis-retinol, 9-cis-retinol and 13-cis-retinol. The sequence is that of Retinol dehydrogenase 10-A (rdh10-a) from Xenopus laevis (African clawed frog).